Reading from the N-terminus, the 353-residue chain is uncharacterized protein (353 aa).

9 helical membrane passes run 16–36 (AAYI…ISCG), 77–97 (VVLA…FQGL), 106–128 (YTLG…GLHL), 140–160 (SVAA…LVHA), 167–187 (LILT…LIIA), 208–228 (GWSY…LLII), 263–283 (LLTG…LVIP), 296–316 (HLLP…DLLS), and 323–343 (IELP…ALIL).

It belongs to the binding-protein-dependent transport system permease family. FecCD subfamily. The complex is composed of two ATP-binding proteins (YvrA), two transmembrane proteins (YvrB) and a solute-binding protein (YvrC).

It is found in the cell membrane. In terms of biological role, probably part of an ABC transporter complex. Probably responsible for the translocation of the substrate across the membrane. This is an uncharacterized protein from Bacillus subtilis (strain 168).